A 269-amino-acid chain; its full sequence is Type II iodothyronine deiodinase (269 aa).

The Lumenal segment spans residues 1 to 7 (MGLLSVD). Residues 8 to 28 (LLITLQILPWFFSNCLFLALY) traverse the membrane as a helical; Signal-anchor for type III membrane protein segment. The Cytoplasmic segment spans residues 29-269 (DSVVLLKHVI…RUVPTCELIM (241 aa)). The active site involves U128. Non-standard amino acids (selenocysteine) are located at U128 and U261.

This sequence belongs to the iodothyronine deiodinase family. In terms of assembly, predominantly monomer. Can form homodimers but homodimerization is not essential for enzyme activity.

Its subcellular location is the endoplasmic reticulum membrane. It carries out the reaction 3,3',5-triiodo-L-thyronine + iodide + A + H(+) = L-thyroxine + AH2. The enzyme catalyses 3,3'-diiodo-L-thyronine + iodide + A + H(+) = 3,3',5'-triiodo-L-thyronine + AH2. The catalysed reaction is 3'-iodo-L-thyronine + iodide + A + H(+) = 3',5'-diiodo-L-thyronine + AH2. It catalyses the reaction 3,3'-diiodothyronamine + iodide + A + H(+) = 3,3',5'-triiodothyronamine + AH2. It carries out the reaction 3'-iodothyronamine + iodide + A + H(+) = 3',5'-diiodothyronamine + AH2. Its function is as follows. Plays a crucial role in the metabolism of thyroid hormones (TH) and has specific roles in TH activation and inactivation by deiodination. Catalyzes the deiodination of L-thyroxine (T4) to 3,5,3'-triiodothyronine (T3), 3,3',5'-triiodothyronine (rT3) to 3,3'-diiodothyronine (3,3'-T2) and 3',5'-diiodothyronine (3',5'-T2) to 3'-monoiodothyronine (3'-T1) via outer-ring deiodination (ORD). Catalyzes the phenolic ring deiodinations of 3,3',5'-triiodothyronamine and 3',5'- diiodothyronamine. The protein is Type II iodothyronine deiodinase (dio2) of Neoceratodus forsteri (Australian lungfish).